Consider the following 884-residue polypeptide: MNIPTKFTTSKIRSDFLEFFKNKGHKIVPSAPLVPSNDPTLLFTNSGMVQFKDVFLGAEKRSEVRVADVQCCLRAGGKHNDLDSVGYTARHHTFFEMLGNWSFGDYFKKEAIMWAWELLTQVWELPPERLLVTVYHTDDESYALWRDMVGVPEDRIVRIGDNKGAPFASDNFWQMADTGPCGPCTEIFYDHGEHIPGGPPGSPGEDGDRFIEIWNLVFMQFDRQSDGTLVPLPTPCVDTGMGLERLAAILQHVHTNYEIDLFQTLILKAAELTAVADVQNKSLCVIADHSRACAFLIVDGVLPSNEGRGYVLRRIIRRALRHGWMLGVRQPFFNNMVPTLIAVMGDAYPKLQAAAESVMRTLLAEEERFAETLDVGMKIFNEVAAKVANGVIPGSDAFRLYDTYGFPVDLTADIARERGMRVDMAGFEAAMTQQRKTARAAGKFGRGVQLSAERAATLSPTVFLGYEQLQADDLRVVALLSDGGLTDSASVGDEVIVLTDRTPFYAESGGQVGDIGTLMASDGVRLEVTDTQKLMGQFHGHVARIVQGGVKVGDVLSGSVAVARRKMVALNHSATHLLHCALRSVFGTHVVQKGSLVAPDRLRFDFSHFEPISAAQMTLIERMVNDEVRANHLVMIEQMGMQAALDAGAMALFGEKYGEHVRVVTMGTSVELCGGTHITRTGDIGLFKIISECGVSSGVRRIEAVTGESALNHVLAEEHRLYEVAGLIGSNANNVVNHIRQLTDRQKTLERELEKLKGKLISGTITDLLSMAVNVADVKVVAARLDGLDGKALREALDRLKLQLSDAVIVLAGVTGGKVALVTAVNGPRAMGKVKADTLLSHVATQINGRGGGRVDFAQGGGEDGPSLRSALDGVATWVKQHLN.

Zn(2+)-binding residues include histidine 572, histidine 576, cysteine 673, and histidine 677.

It belongs to the class-II aminoacyl-tRNA synthetase family. The cofactor is Zn(2+).

Its subcellular location is the cytoplasm. The enzyme catalyses tRNA(Ala) + L-alanine + ATP = L-alanyl-tRNA(Ala) + AMP + diphosphate. Its function is as follows. Catalyzes the attachment of alanine to tRNA(Ala) in a two-step reaction: alanine is first activated by ATP to form Ala-AMP and then transferred to the acceptor end of tRNA(Ala). Also edits incorrectly charged Ser-tRNA(Ala) and Gly-tRNA(Ala) via its editing domain. The protein is Alanine--tRNA ligase of Xylella fastidiosa (strain M23).